The following is a 511-amino-acid chain: Probable DNA ligase (511 aa).

Residue Glu208 coordinates ATP. Catalysis depends on Lys210, which acts as the N6-AMP-lysine intermediate. ATP contacts are provided by Arg215, Arg230, Glu259, Phe299, Arg377, and Lys383.

This sequence belongs to the ATP-dependent DNA ligase family. Requires Mg(2+) as cofactor.

The catalysed reaction is ATP + (deoxyribonucleotide)n-3'-hydroxyl + 5'-phospho-(deoxyribonucleotide)m = (deoxyribonucleotide)n+m + AMP + diphosphate.. DNA ligase that seals nicks in double-stranded DNA during DNA replication, DNA recombination and DNA repair. The polypeptide is Probable DNA ligase (Streptomyces griseus subsp. griseus (strain JCM 4626 / CBS 651.72 / NBRC 13350 / KCC S-0626 / ISP 5235)).